We begin with the raw amino-acid sequence, 364 residues long: Anthranilate phosphoribosyltransferase (364 aa).

5-phospho-alpha-D-ribose 1-diphosphate-binding positions include G101, 104–105 (GD), T109, 111–114 (NLST), 129–137 (KHGNRAASS), and G141. G101 provides a ligand contact to anthranilate. Residue S113 participates in Mg(2+) binding. N132 is a binding site for anthranilate. R187 is an anthranilate binding site. D245 and E246 together coordinate Mg(2+).

The protein belongs to the anthranilate phosphoribosyltransferase family. As to quaternary structure, homodimer. Requires Mg(2+) as cofactor.

The catalysed reaction is N-(5-phospho-beta-D-ribosyl)anthranilate + diphosphate = 5-phospho-alpha-D-ribose 1-diphosphate + anthranilate. Its pathway is amino-acid biosynthesis; L-tryptophan biosynthesis; L-tryptophan from chorismate: step 2/5. Its function is as follows. Catalyzes the transfer of the phosphoribosyl group of 5-phosphorylribose-1-pyrophosphate (PRPP) to anthranilate to yield N-(5'-phosphoribosyl)-anthranilate (PRA). This Mycolicibacterium gilvum (strain PYR-GCK) (Mycobacterium gilvum (strain PYR-GCK)) protein is Anthranilate phosphoribosyltransferase.